The primary structure comprises 507 residues: ATP synthase subunit alpha, chloroplastic (507 aa).

Residue 170–177 (GDRQTGKT) participates in ATP binding.

It belongs to the ATPase alpha/beta chains family. F-type ATPases have 2 components, CF(1) - the catalytic core - and CF(0) - the membrane proton channel. CF(1) has five subunits: alpha(3), beta(3), gamma(1), delta(1), epsilon(1). CF(0) has four main subunits: a, b, b' and c.

The protein localises to the plastid. Its subcellular location is the chloroplast thylakoid membrane. It catalyses the reaction ATP + H2O + 4 H(+)(in) = ADP + phosphate + 5 H(+)(out). Functionally, produces ATP from ADP in the presence of a proton gradient across the membrane. The alpha chain is a regulatory subunit. The protein is ATP synthase subunit alpha, chloroplastic of Anthoceros angustus (Hornwort).